We begin with the raw amino-acid sequence, 320 residues long: Nicotianamine synthase 1 (320 aa).

This sequence belongs to the nicotianamine synthase (NAS)-like family. In terms of tissue distribution, in shoots and roots.

The catalysed reaction is 3 S-adenosyl-L-methionine = nicotianamine + 3 S-methyl-5'-thioadenosine + 3 H(+). In terms of biological role, synthesizes nicotianamine, a polyamine which serves as a sensor for the physiological iron status within the plant, and/or might be involved in the transport of iron. In Arabidopsis thaliana (Mouse-ear cress), this protein is Nicotianamine synthase 1 (NAS1).